Reading from the N-terminus, the 185-residue chain is Ribosome-recycling factor (185 aa).

Belongs to the RRF family.

It localises to the cytoplasm. Functionally, responsible for the release of ribosomes from messenger RNA at the termination of protein biosynthesis. May increase the efficiency of translation by recycling ribosomes from one round of translation to another. This Pectobacterium carotovorum subsp. carotovorum (strain PC1) protein is Ribosome-recycling factor.